We begin with the raw amino-acid sequence, 125 residues long: uncharacterized protein (125 aa).

Residues Met-1–Asn-33 show a composition bias toward polar residues. Disordered regions lie at residues Met-1 to Glu-35 and Ser-44 to Thr-63. Positions Asn-53–Thr-63 are enriched in basic residues.

This is an uncharacterized protein from Schizosaccharomyces pombe (strain 972 / ATCC 24843) (Fission yeast).